The primary structure comprises 388 residues: Succinate--CoA ligase [ADP-forming] subunit beta (388 aa).

The ATP-grasp domain occupies 9-236 (KKLFAEHGVP…VAAVDPLEQK (228 aa)). Residues Lys-45, 52–54 (GRG), Glu-91, Ser-94, and Glu-99 each bind ATP. 2 residues coordinate Mg(2+): Asn-191 and Asp-205. Substrate is bound by residues Asn-256 and 318 to 320 (GIT).

This sequence belongs to the succinate/malate CoA ligase beta subunit family. In terms of assembly, heterotetramer of two alpha and two beta subunits. Mg(2+) is required as a cofactor.

It catalyses the reaction succinate + ATP + CoA = succinyl-CoA + ADP + phosphate. The enzyme catalyses GTP + succinate + CoA = succinyl-CoA + GDP + phosphate. It functions in the pathway carbohydrate metabolism; tricarboxylic acid cycle; succinate from succinyl-CoA (ligase route): step 1/1. Its function is as follows. Succinyl-CoA synthetase functions in the citric acid cycle (TCA), coupling the hydrolysis of succinyl-CoA to the synthesis of either ATP or GTP and thus represents the only step of substrate-level phosphorylation in the TCA. The beta subunit provides nucleotide specificity of the enzyme and binds the substrate succinate, while the binding sites for coenzyme A and phosphate are found in the alpha subunit. This Parafrankia sp. (strain EAN1pec) protein is Succinate--CoA ligase [ADP-forming] subunit beta.